A 378-amino-acid chain; its full sequence is Protein RecA (378 aa).

79–86 (GPESSGKT) is an ATP binding site.

The protein belongs to the RecA family.

It localises to the cytoplasm. Can catalyze the hydrolysis of ATP in the presence of single-stranded DNA, the ATP-dependent uptake of single-stranded DNA by duplex DNA, and the ATP-dependent hybridization of homologous single-stranded DNAs. It interacts with LexA causing its activation and leading to its autocatalytic cleavage. The chain is Protein RecA from Streptococcus pyogenes serotype M12 (strain MGAS2096).